Here is a 332-residue protein sequence, read N- to C-terminus: MNSTQPLGMHTSLHSWNRSAHGMPTNVSESLAKGYSDGGCYEQLFVSPEVFVTLGVISLLENILVIVAIAKNKNLHSPMYFFICSLAVADMLVSVSNGSETIVITLLNSTDTDAQSFTVDIDNVIDSVICSSLLASICSLLSIAVDRYFTIFYALQYHNIMTVKRVAITISAIWAACTVSGVLFIIYSDSSAVIICLITVFFTMLALMASLYVHMFLMARLHIKRIAVLPGSGTIRQGANMKGAITLTILIGVFVVCWAPFFLHLIFYISCPQNPYCVCFMSHFNLYLILIMCNSIIDPLIYALRSQELRKTFKEIICCSPLGGLCDLSSRY.

The Extracellular segment spans residues 1 to 43 (MNSTQPLGMHTSLHSWNRSAHGMPTNVSESLAKGYSDGGCYEQ). Residues asparagine 2, asparagine 17, and asparagine 26 are each glycosylated (N-linked (GlcNAc...) asparagine). 2 cysteine pairs are disulfide-bonded: cysteine 40–cysteine 279 and cysteine 271–cysteine 277. A helical transmembrane segment spans residues 44–69 (LFVSPEVFVTLGVISLLENILVIVAI). The Cytoplasmic segment spans residues 70-81 (AKNKNLHSPMYF). Residues 82–106 (FICSLAVADMLVSVSNGSETIVITL) traverse the membrane as a helical segment. Residues glutamate 100, aspartate 122, and aspartate 126 each contribute to the Ca(2+) site. Residues 107-123 (LNSTDTDAQSFTVDIDN) are Extracellular-facing. Residues 124-145 (VIDSVICSSLLASICSLLSIAV) form a helical membrane-spanning segment. Topologically, residues 146-165 (DRYFTIFYALQYHNIMTVKR) are cytoplasmic. The helical transmembrane segment at 166-186 (VAITISAIWAACTVSGVLFII) threads the bilayer. The Extracellular portion of the chain corresponds to 187 to 191 (YSDSS). A helical transmembrane segment spans residues 192 to 215 (AVIICLITVFFTMLALMASLYVHM). Over 216–248 (FLMARLHIKRIAVLPGSGTIRQGANMKGAITLT) the chain is Cytoplasmic. The helical transmembrane segment at 249–271 (ILIGVFVVCWAPFFLHLIFYISC) threads the bilayer. The Extracellular segment spans residues 272 to 280 (PQNPYCVCF). The helical transmembrane segment at 281–304 (MSHFNLYLILIMCNSIIDPLIYAL) threads the bilayer. At 305–332 (RSQELRKTFKEIICCSPLGGLCDLSSRY) the chain is on the cytoplasmic side. Residue cysteine 318 is the site of S-palmitoyl cysteine attachment.

The protein belongs to the G-protein coupled receptor 1 family. In terms of assembly, homodimer; disulfide-linked, also forms higher order oligomers. Interacts with GNAS. Interacts with ATRNL1. Interacts with MGRN1; this interaction competes with GNAS-binding and thus inhibits agonist-induced cAMP production. Interacts with MRAP and MRAP2; these associated factors increase ligand-sensitivity and generation of cAMP.

The protein localises to the cell membrane. Hormone receptor that acts as a key component of the leptin-melanocortin pathway at the intersection of homeostatic maintenance of energetic state. Plays a role in regulating food intake: activation by a stimulating hormone such as anorexigenic alpha-melanocyte stimulating hormone (alpha-MSH) inhibits appetite, whereas binding to a natural antagonist like Agouti-related protein/AGRP promotes appetite. G-protein-coupled receptor that activates conventional Galphas signaling leading to induction of anorexogenic signaling in the hypothalamus to result in negative energy balance. Regulates the firing activity of neurons from the hypothalamus by alpha-MSH and AGRP independently of Galphas signaling by ligand-induced coupling of closure of inwardly rectifying potassium channel KCNJ13. In intestinal epithelial cells, plays a role in the inhibition of hepatic glucose production via nesfatin-1/NUCB2 leading to increased cyclic adenosine monophosphate (cAMP) levels and glucagon-like peptide 1 (GLP-1) secretion in the intestinal epithelium. The protein is Melanocortin receptor 4 (MC4R) of Bos taurus (Bovine).